A 183-amino-acid polypeptide reads, in one-letter code: U3 small nucleolar ribonucleoprotein protein imp3 (183 aa).

The S4 RNA-binding domain occupies 108–174; sequence RRLPVVMRNI…IKKHVMDYNN (67 aa).

Belongs to the universal ribosomal protein uS4 family. As to quaternary structure, component of a heterotrimeric complex containing imp3, imp4 and mpp10.

It is found in the nucleus. The protein resides in the nucleolus. In terms of biological role, component of the U3 small nucleolar ribonucleoprotein. Required for the early cleavages at sites A0, A1 and A2 during 18S ribosomal pre-RNA processing. The chain is U3 small nucleolar ribonucleoprotein protein imp3 from Caenorhabditis elegans.